We begin with the raw amino-acid sequence, 121 residues long: uncharacterized protein (121 aa).

The next 3 membrane-spanning stretches (helical) occupy residues 2-22 (VFVTIIIIINISYNIYNIYTI), 42-62 (FICIYVCISGGNMPLWAYILF), and 89-109 (IFFAFCCHHIWSLLPHHLSIF).

It is found in the membrane. This is an uncharacterized protein from Saccharomyces cerevisiae (strain ATCC 204508 / S288c) (Baker's yeast).